The following is an 878-amino-acid chain: Leucine--tRNA ligase (878 aa).

A 'HIGH' region motif is present at residues 43–53; sequence PYPSGRIHIGH. Positions 630 to 634 match the 'KMSKS' region motif; it reads KMSKS. Lys-633 provides a ligand contact to ATP.

It belongs to the class-I aminoacyl-tRNA synthetase family.

The protein localises to the cytoplasm. The enzyme catalyses tRNA(Leu) + L-leucine + ATP = L-leucyl-tRNA(Leu) + AMP + diphosphate. The chain is Leucine--tRNA ligase from Nitrobacter hamburgensis (strain DSM 10229 / NCIMB 13809 / X14).